Reading from the N-terminus, the 80-residue chain is Exodeoxyribonuclease 7 small subunit (80 aa).

The protein belongs to the XseB family. As to quaternary structure, heterooligomer composed of large and small subunits.

The protein localises to the cytoplasm. The enzyme catalyses Exonucleolytic cleavage in either 5'- to 3'- or 3'- to 5'-direction to yield nucleoside 5'-phosphates.. In terms of biological role, bidirectionally degrades single-stranded DNA into large acid-insoluble oligonucleotides, which are then degraded further into small acid-soluble oligonucleotides. The polypeptide is Exodeoxyribonuclease 7 small subunit (Vibrio campbellii (strain ATCC BAA-1116)).